The chain runs to 427 residues: Transcobalamin-2 (427 aa).

The N-terminal stretch at 1–18 is a signal peptide; that stretch reads MELLKALLLLSGVLGALA. Intrachain disulfides connect Cys21–Cys268, Cys116–Cys310, and Cys165–Cys208. Residues 152-156, His193, 193-197, Asn245, Ser248, Gln292, and 395-397 contribute to the cob(II)alamin site; these read TSYYQ, HLSVD, and WQL.

Belongs to the eukaryotic cobalamin transport proteins family. In terms of assembly, interacts with CD320 (via LDL-receptor class A domains).

The protein resides in the secreted. Functionally, primary vitamin B12-binding and transport protein. Delivers cobalamin to cells. The sequence is that of Transcobalamin-2 (Tcn2) from Rattus norvegicus (Rat).